An 89-amino-acid polypeptide reads, in one-letter code: Probable Fe(2+)-trafficking protein (89 aa).

Belongs to the Fe(2+)-trafficking protein family.

In terms of biological role, could be a mediator in iron transactions between iron acquisition and iron-requiring processes, such as synthesis and/or repair of Fe-S clusters in biosynthetic enzymes. The chain is Probable Fe(2+)-trafficking protein from Stenotrophomonas maltophilia (strain K279a).